The chain runs to 179 residues: ATP-dependent protease subunit HslV (179 aa).

Threonine 7 is an active-site residue. Na(+) is bound by residues glycine 162, cysteine 165, and threonine 168.

This sequence belongs to the peptidase T1B family. HslV subfamily. In terms of assembly, a double ring-shaped homohexamer of HslV is capped on each side by a ring-shaped HslU homohexamer. The assembly of the HslU/HslV complex is dependent on binding of ATP.

The protein resides in the cytoplasm. It carries out the reaction ATP-dependent cleavage of peptide bonds with broad specificity.. Its activity is regulated as follows. Allosterically activated by HslU binding. Protease subunit of a proteasome-like degradation complex believed to be a general protein degrading machinery. This chain is ATP-dependent protease subunit HslV, found in Bordetella petrii (strain ATCC BAA-461 / DSM 12804 / CCUG 43448).